The chain runs to 73 residues: UPF0352 protein HD_1515 (73 aa).

Belongs to the UPF0352 family.

This chain is UPF0352 protein HD_1515, found in Haemophilus ducreyi (strain 35000HP / ATCC 700724).